The sequence spans 143 residues: ATP synthase subunit b' (143 aa).

Residues alanine 6–phenylalanine 26 traverse the membrane as a helical segment.

It belongs to the ATPase B chain family. As to quaternary structure, F-type ATPases have 2 components, F(1) - the catalytic core - and F(0) - the membrane proton channel. F(1) has five subunits: alpha(3), beta(3), gamma(1), delta(1), epsilon(1). F(0) has four main subunits: a(1), b(1), b'(1) and c(10-14). The alpha and beta chains form an alternating ring which encloses part of the gamma chain. F(1) is attached to F(0) by a central stalk formed by the gamma and epsilon chains, while a peripheral stalk is formed by the delta, b and b' chains.

It localises to the cellular thylakoid membrane. Its function is as follows. F(1)F(0) ATP synthase produces ATP from ADP in the presence of a proton or sodium gradient. F-type ATPases consist of two structural domains, F(1) containing the extramembraneous catalytic core and F(0) containing the membrane proton channel, linked together by a central stalk and a peripheral stalk. During catalysis, ATP synthesis in the catalytic domain of F(1) is coupled via a rotary mechanism of the central stalk subunits to proton translocation. In terms of biological role, component of the F(0) channel, it forms part of the peripheral stalk, linking F(1) to F(0). The b'-subunit is a diverged and duplicated form of b found in plants and photosynthetic bacteria. The sequence is that of ATP synthase subunit b' from Microcystis aeruginosa (strain NIES-843 / IAM M-2473).